We begin with the raw amino-acid sequence, 890 residues long: Translation initiation factor IF-2 (890 aa).

Disordered regions lie at residues 31 to 164 (KLAQ…PAEP) and 189 to 266 (FKAP…ESLK). The segment covering 42–54 (SSSEKPSAKEKSV) has biased composition (basic and acidic residues). Low complexity predominate over residues 55–72 (KVALAATSTPTASAEQAS). Acidic residues predominate over residues 114 to 128 (PEPELEVVDEVCDES). Basic and acidic residues-rich tracts occupy residues 149–163 (PQEK…KPAE) and 242–266 (PKRD…ESLK). The tr-type G domain occupies 395–564 (IRSPIVAFMG…ALQAEVLELK (170 aa)). Residues 404–411 (GHVDHGKT) are G1. 404–411 (GHVDHGKT) is a GTP binding site. Residues 429–433 (AITQH) form a G2 region. Residues 450–453 (DTPG) form a G3 region. GTP is bound by residues 450–454 (DTPGH) and 504–507 (NKCD). The segment at 504 to 507 (NKCD) is G4. Residues 540–542 (SAK) are G5.

The protein belongs to the TRAFAC class translation factor GTPase superfamily. Classic translation factor GTPase family. IF-2 subfamily.

Its subcellular location is the cytoplasm. One of the essential components for the initiation of protein synthesis. Protects formylmethionyl-tRNA from spontaneous hydrolysis and promotes its binding to the 30S ribosomal subunits. Also involved in the hydrolysis of GTP during the formation of the 70S ribosomal complex. The chain is Translation initiation factor IF-2 (infB) from Chlamydia pneumoniae (Chlamydophila pneumoniae).